The chain runs to 856 residues: Facilitated trehalose transporter Tret1 (856 aa).

2 disordered regions span residues 1–29 and 62–202; these read MSGR…LKEK and DPFL…KATS. Over 1–389 the chain is Cytoplasmic; the sequence is MSGRDNRGAG…LEVYRPTTNP (389 aa). Positions 69–80 are enriched in polar residues; that stretch reads VSPQRHPQTVRT. The segment covering 133 to 142 has biased composition (basic and acidic residues); it reads EIREHRDRQQ. Residues 170–180 are compositionally biased toward polar residues; the sequence is GNSNTNSNKAA. Serine 247, serine 248, serine 249, serine 319, and serine 321 each carry phosphoserine. The disordered stretch occupies residues 326-345; that stretch reads LTSRQHFQQQRSISTDSRKS. Residues 329 to 340 are compositionally biased toward polar residues; that stretch reads RQHFQQQRSIST. Residues 390 to 410 traverse the membrane as a helical segment; that stretch reads IFIWTQVIAALSVSLGSLVVG. Residues 411-439 are Extracellular-facing; it reads FVSAYTSPALVSMSDPNITSFTVTKDAGS. N-linked (GlcNAc...) asparagine glycosylation occurs at asparagine 427. Residues 440–460 traverse the membrane as a helical segment; the sequence is WVGGIMPLAGLVGGVAGGPLI. The Cytoplasmic segment spans residues 461 to 472; the sequence is EYMGRRNTILAT. A helical membrane pass occupies residues 473-493; sequence AVPFIVSSLLIACAVNVAMVL. Residues 494–496 lie on the Extracellular side of the membrane; the sequence is CGR. The helical transmembrane segment at 497-517 threads the bilayer; it reads FLAGFCVGIASLSLPVYLGET. The Cytoplasmic segment spans residues 518–527; sequence VQPEVRGTLG. Residues 528 to 548 form a helical membrane-spanning segment; sequence LLPTAFGNIGILVCFVAGSFM. N-linked (GlcNAc...) asparagine glycosylation occurs at asparagine 549. The Extracellular portion of the chain corresponds to 549–551; sequence NWS. A helical membrane pass occupies residues 552–572; sequence MLAFLGAALPVPFLILMFLIP. Topologically, residues 573 to 635 are cytoplasmic; it reads ETPRWYVSRG…ELLKRNNLKP (63 aa). Residues 636–656 traverse the membrane as a helical segment; the sequence is LSISLGLMFFQQFSGINAVIF. The Extracellular segment spans residues 657-672; the sequence is YTVQIFKDAGSTIDGN. The helical transmembrane segment at 673 to 693 threads the bilayer; that stretch reads VCTIIVGVVNFVATFIGILLI. The Cytoplasmic portion of the chain corresponds to 694–699; it reads DRAGRK. A helical membrane pass occupies residues 700–720; it reads ILLYASDIAMVLTLFVLGGFF. Topologically, residues 721-739 are extracellular; that stretch reads YCKAHGPDVSHLGWLPLTC. The chain crosses the membrane as a helical span at residues 740–760; sequence FVVYILGFSVGFGPIPWLMMG. Over 761–766 the chain is Cytoplasmic; the sequence is EILPAK. Residues 767–787 traverse the membrane as a helical segment; that stretch reads IRGAAASVATSFNWTCTFVVT. Residues 788 to 800 lie on the Extracellular side of the membrane; the sequence is KTFQDLVGSLGAH. A helical membrane pass occupies residues 801 to 821; it reads GAFWLFGAICFVGLFFVILYV. The Cytoplasmic segment spans residues 822 to 856; the sequence is PETQGKTLEDIERKMMGRVRRMSSVANIKPLSFNM. Serine 844 and serine 845 each carry phosphoserine.

The protein belongs to the major facilitator superfamily. Sugar transporter (TC 2.A.1.1) family. Trehalose transporter subfamily.

The protein localises to the cell membrane. Low-capacity facilitative transporter for trehalose. Does not transport maltose, sucrose or lactose. Mediates the bidirectional transfer of trehalose. Responsible for the transport of trehalose synthesized in the fat body and the incorporation of trehalose into other tissues that require a carbon source, thereby regulating trehalose levels in the hemolymph. The protein is Facilitated trehalose transporter Tret1 of Drosophila yakuba (Fruit fly).